The primary structure comprises 162 residues: FCS-Like Zinc finger 6 (162 aa).

Disordered stretches follow at residues 25-47 (NLPS…YGSN) and 121-162 (RQEQ…AAAV). The segment covering 27–47 (PSESEPSNQQKPTVASPYGSN) has biased composition (polar residues). The segment at 88 to 132 (HFLRSCALCERLLVPGRDIYMYRGDKAFCSSECRQEQMAQDERKE) adopts an FLZ-type zinc-finger fold. A compositionally biased stretch (low complexity) spans 147 to 162 (APARAKPGKGRAAAAV).

Belongs to the FLZ family. As to quaternary structure, interacts with KIN10 and KIN11 via its FLZ-type zinc finger domain. In terms of tissue distribution, early expressed in hypocotyl and cotyledon. Later expressed in old or senescing leaves and in pistil, pollen and filament of open flowers.

The protein localises to the nucleus. It localises to the cytoplasm. The protein resides in the endoplasmic reticulum. In terms of biological role, may act as an adapter to facilitate the interaction of SnRK1 complex with effector proteins, conferring tissue- and stimulus-type specific differences in the SnRK1 regulation pathway. Negatively regulates KIN10 leading to a repression of the SnRK1 signaling pathway. The polypeptide is FCS-Like Zinc finger 6 (Arabidopsis thaliana (Mouse-ear cress)).